The following is a 142-amino-acid chain: Large ribosomal subunit protein uL13 (142 aa).

This sequence belongs to the universal ribosomal protein uL13 family. In terms of assembly, part of the 50S ribosomal subunit.

This protein is one of the early assembly proteins of the 50S ribosomal subunit, although it is not seen to bind rRNA by itself. It is important during the early stages of 50S assembly. The polypeptide is Large ribosomal subunit protein uL13 (Mannheimia succiniciproducens (strain KCTC 0769BP / MBEL55E)).